The chain runs to 428 residues: 3-phosphoshikimate 1-carboxyvinyltransferase (428 aa).

3 residues coordinate 3-phosphoshikimate: Lys21, Ser22, and Arg26. Phosphoenolpyruvate is bound at residue Lys21. Phosphoenolpyruvate contacts are provided by Gly91 and Arg119. Positions 164, 166, 313, and 340 each coordinate 3-phosphoshikimate. Gln166 contacts phosphoenolpyruvate. Asp313 functions as the Proton acceptor in the catalytic mechanism. The phosphoenolpyruvate site is built by Arg344 and Arg386.

It belongs to the EPSP synthase family. In terms of assembly, monomer.

It localises to the cytoplasm. The enzyme catalyses 3-phosphoshikimate + phosphoenolpyruvate = 5-O-(1-carboxyvinyl)-3-phosphoshikimate + phosphate. The protein operates within metabolic intermediate biosynthesis; chorismate biosynthesis; chorismate from D-erythrose 4-phosphate and phosphoenolpyruvate: step 6/7. Functionally, catalyzes the transfer of the enolpyruvyl moiety of phosphoenolpyruvate (PEP) to the 5-hydroxyl of shikimate-3-phosphate (S3P) to produce enolpyruvyl shikimate-3-phosphate and inorganic phosphate. This Campylobacter jejuni subsp. doylei (strain ATCC BAA-1458 / RM4099 / 269.97) protein is 3-phosphoshikimate 1-carboxyvinyltransferase.